Consider the following 710-residue polypeptide: Nucleolin (710 aa).

The tract at residues 1–303 is disordered; the sequence is MVKLAKAGKN…KKQKVEGTEP (303 aa). N6-acetyllysine occurs at positions 9, 15, and 16. A compositionally biased stretch (acidic residues) spans 24 to 43; that stretch reads VEEDSEDEEMSEDEEDDSSG. 4 positions are modified to phosphoserine: Ser28, Ser34, Ser41, and Ser42. The segment covering 56–107 has biased composition (low complexity); that stretch reads AAATSAKKVVVSPTKKVAVATPAKKAAVTPGKKAAATPAKKTVTPAKAVTTP. Residues 58-65 form repeat 1; that stretch reads ATSAKKVV. The tract at residues 58–135 is 8 X 8 AA tandem repeats of X-T-P-X-K-K-X-X; sequence ATSAKKVVVS…GAAIPAKGAK (78 aa). Phosphoserine is present on Ser67. Residues Thr69, Thr76, Thr84, and Thr92 each carry the phosphothreonine modification. A run of 3 repeats spans residues 75–82, 83–90, and 91–98. Lys96 carries the post-translational modification N6-acetyllysine. Thr99 carries the phosphothreonine modification. The stretch at 99-104 is one 5; truncated repeat; sequence TPAKAV. Lys102 is subject to N6-acetyllysine. Repeat 6 spans residues 105 to 112; the sequence is TTPGKKGA. At Thr106 the chain carries Phosphothreonine. Position 109 is an N6-acetyllysine (Lys109). A Phosphothreonine modification is found at Thr113. N6-acetyllysine is present on Lys116. 2 tandem repeats follow at residues 120-127 and 128-135. Position 121 is a phosphothreonine (Thr121). Low complexity predominate over residues 122-137; that stretch reads PGKKGAAIPAKGAKNG. Lys124 is subject to N6-acetyllysine. 2 positions are modified to phosphoserine: Ser145 and Ser153. Acidic residues predominate over residues 145 to 171; sequence SDEEEDDDSEEDEEDDEDEDEDEDEIE. Over residues 172–183 the composition is skewed to low complexity; that stretch reads PAAMKAAAAAPA. Phosphoserine is present on residues Ser184 and Ser206. Residues 184–211 show a composition bias toward acidic residues; that stretch reads SEDEDDEDDEDDEDDDDDEEDDSEEEAM. The residue at position 214 (Thr214) is a Phosphothreonine. Residues 234-272 are compositionally biased toward acidic residues; it reads EDEDEEEDDEDEDDDDDEDDEDDDDEDDEEEEEEEEEEP. The span at 273 to 300 shows a compositional bias: basic and acidic residues; sequence VKEAPGKRKKEMAKQKAAPEAKKQKVEG. Lys297 participates in a covalent cross-link: Glycyl lysine isopeptide (Lys-Gly) (interchain with G-Cter in SUMO1); alternate. A Glycyl lysine isopeptide (Lys-Gly) (interchain with G-Cter in SUMO2); alternate cross-link involves residue Lys297. At Thr301 the chain carries Phosphothreonine. RRM domains follow at residues 307–383 and 393–466; these read FNLF…KPKG and RTLL…YTGE. At Lys318 the chain carries N6-acetyllysine. Lys324 participates in a covalent cross-link: Glycyl lysine isopeptide (Lys-Gly) (interchain with G-Cter in SUMO1); alternate. Residue Lys324 forms a Glycyl lysine isopeptide (Lys-Gly) (interchain with G-Cter in SUMO2); alternate linkage. Lys348 is modified (N6-acetyllysine). Residue Ser356 is modified to Phosphoserine. Thr367 bears the Phosphothreonine mark. Residue Lys370 forms a Glycyl lysine isopeptide (Lys-Gly) (interchain with G-Cter in SUMO2) linkage. Residue Lys377 forms a Glycyl lysine isopeptide (Lys-Gly) (interchain with G-Cter in SUMO2); alternate linkage. Lys377 carries the post-translational modification N6-acetyllysine; alternate. Lys398 and Lys403 each carry N6-acetyllysine. Residue Thr405 is modified to Phosphothreonine. Residues Lys427 and Lys444 each carry the N6-acetyllysine modification. A phosphoserine mark is found at Ser458 and Ser460. An N6-acetyllysine mark is found at Lys467 and Lys477. Residues 486-560 enclose the RRM 3 domain; sequence KTLVLSNLSY…RAIRLELQGP (75 aa). A Glycyl lysine isopeptide (Lys-Gly) (interchain with G-Cter in SUMO2); alternate cross-link involves residue Lys513. N6-acetyllysine; alternate is present on Lys513. At Lys521 the chain carries N6-acetyllysine. The residue at position 563 (Ser563) is a Phosphoserine. An N6-acetyllysine modification is found at Lys572. Residues 572–647 form the RRM 4 domain; that stretch reads KTLFVKGLSE…NKVTLDWAKP (76 aa). Lys577 participates in a covalent cross-link: Glycyl lysine isopeptide (Lys-Gly) (interchain with G-Cter in SUMO2); alternate. Lys577 carries the post-translational modification N6-acetyllysine; alternate. Ser580 bears the Phosphoserine mark. Lys589 participates in a covalent cross-link: Glycyl lysine isopeptide (Lys-Gly) (interchain with G-Cter in SUMO1); alternate. Lys589 is covalently cross-linked (Glycyl lysine isopeptide (Lys-Gly) (interchain with G-Cter in SUMO2); alternate). Phosphoserine occurs at positions 591 and 619. Residue Lys624 forms a Glycyl lysine isopeptide (Lys-Gly) (interchain with G-Cter in SUMO2) linkage. Residues 640-710 form a disordered region; sequence VTLDWAKPKG…KPQGKKTKFE (71 aa). Lys646 is modified (N6-acetyllysine). Over residues 650 to 696 the composition is skewed to gly residues; the sequence is EGGFGGRGGGRGGFGGRGGGRGGRGGFGGRGRGGFGGRGGFRGGRGG. Asymmetric dimethylarginine occurs at positions 656, 660, 666, 670, 673, 679, 681, 687, and 691. At Arg694 the chain carries Asymmetric dimethylarginine; alternate. Position 694 is an omega-N-methylarginine; alternate (Arg694). Positions 697–710 are enriched in basic and acidic residues; the sequence is GGDHKPQGKKTKFE.

Identified in a IGF2BP1-dependent mRNP granule complex containing untranslated mRNAs. Component of the SWAP complex that consists of NPM1, NCL/nucleolin, PARP1 and SWAP70. Component of a complex which is at least composed of HTATSF1/Tat-SF1, the P-TEFb complex components CDK9 and CCNT1, RNA polymerase II, SUPT5H, and NCL/nucleolin. Interacts with AICDA. Interacts with APTX. Interacts with C1QBP. Interacts with ERBB4. Interacts (via C-terminus) with FMR1 isoform 6 (via N-terminus). Interacts with GZF1; this interaction is important for nucleolar localization of GZF1. Interacts with NSUN2. Interacts with NVL. Interacts (via N-terminus domain) with SETX. Interacts (via RRM1 and C-terminal RRM4/Arg/Gly-rich domains) with TERT; the interaction is important for nucleolar localization of TERT. Interacts with WDR46. Interacts with ZFP36. Interacts with LRRC34. Interacts with RRP1B. Interacts with HNRNPU; this interaction occurs during mitosis. Interacts with RIOK1; RIOK1 recruits NCL to PRMT5 for symmetrically methylation. Interacts with ZBTB7B. Interacts with MDK; this interaction promotes NCL clustering and lateral movements of this complex into lipid rafts leading to MDK internalization. Interacts with HDGF (isoform 1). Interacts with ALKBH2. Interacts with IGFBP5; this interaction is necessary for IGFBP5 localization to the nucleus. Interacts with DDX24 (when ubiquitinated); this interaction may be important during ribosome biogenesis. Post-translationally, some glutamate residues are glycylated by TTLL8. This modification occurs exclusively on glutamate residues and results in a glycine chain on the gamma-carboxyl group. Symmetrically methylated by PRMT5.

The protein localises to the nucleus. Its subcellular location is the nucleolus. It is found in the cytoplasm. Functionally, nucleolin is the major nucleolar protein of growing eukaryotic cells. It is found associated with intranucleolar chromatin and pre-ribosomal particles. It induces chromatin decondensation by binding to histone H1. It is thought to play a role in pre-rRNA transcription and ribosome assembly. May play a role in the process of transcriptional elongation. Binds RNA oligonucleotides with 5'-UUAGGG-3' repeats more tightly than the telomeric single-stranded DNA 5'-TTAGGG-3' repeats. The chain is Nucleolin (NCL) from Homo sapiens (Human).